The primary structure comprises 520 residues: GMP synthase [glutamine-hydrolyzing] (520 aa).

One can recognise a Glutamine amidotransferase type-1 domain in the interval 12-205 (KIIVLDYGSQ…AISICGARGD (194 aa)). Cys-89 acts as the Nucleophile in catalysis. Residues His-179 and Glu-181 contribute to the active site. The 190-residue stretch at 206 to 395 (WSMDNFIDME…LGMPEEIVWR (190 aa)) folds into the GMPS ATP-PPase domain. 233–239 (SGGVDSS) serves as a coordination point for ATP.

As to quaternary structure, homodimer.

The enzyme catalyses XMP + L-glutamine + ATP + H2O = GMP + L-glutamate + AMP + diphosphate + 2 H(+). It functions in the pathway purine metabolism; GMP biosynthesis; GMP from XMP (L-Gln route): step 1/1. Catalyzes the synthesis of GMP from XMP. In Streptococcus pyogenes serotype M2 (strain MGAS10270), this protein is GMP synthase [glutamine-hydrolyzing].